Here is a 270-residue protein sequence, read N- to C-terminus: Phosphoserine phosphatase (270 aa).

The active-site Nucleophile is D67. Mg(2+) is bound by residues D67 and D69. The active-site Proton donor is the D69. Residues E76, R112, 156–157 (SG), and K205 each bind substrate. D227 serves as a coordination point for Mg(2+).

This sequence belongs to the HAD-like hydrolase superfamily. SerB family. Requires Mg(2+) as cofactor.

It catalyses the reaction O-phospho-L-serine + H2O = L-serine + phosphate. The enzyme catalyses O-phospho-D-serine + H2O = D-serine + phosphate. Its pathway is amino-acid biosynthesis; L-serine biosynthesis; L-serine from 3-phospho-D-glycerate: step 3/3. Catalyzes the last step in the biosynthesis of serine from carbohydrates. The reaction mechanism proceeds via the formation of a phosphoryl-enzyme intermediates. The chain is Phosphoserine phosphatase (aay) from Drosophila melanogaster (Fruit fly).